The primary structure comprises 94 residues: Small ribosomal subunit protein bS18 (94 aa).

This sequence belongs to the bacterial ribosomal protein bS18 family. As to quaternary structure, part of the 30S ribosomal subunit. Forms a tight heterodimer with protein bS6.

Binds as a heterodimer with protein bS6 to the central domain of the 16S rRNA, where it helps stabilize the platform of the 30S subunit. The sequence is that of Small ribosomal subunit protein bS18 from Albidiferax ferrireducens (strain ATCC BAA-621 / DSM 15236 / T118) (Rhodoferax ferrireducens).